We begin with the raw amino-acid sequence, 495 residues long: MEEESIKEGSEKPRGARTADKAGWIKKSSGGLLGLWKDRYLLLCQAQLLVYENEDEQKCVETVELGSYEKCQDLRTLLKRKHHRFILLRSPGNKVSDIKFQAPSGEEKESWIKALNEGINRGKNKAFDEVKVDKTCALEHVTRNRVRGGQRRRPPTRIHLKEVASAASDGLSRLDLDVPDSGPPVFAPLSDISEDQPQEPPRALMPPVKPSPGPETSAVEDSKETPAGERALTPDSASSGANPESQEDAETPAKEDSDVKSLPNSTLSEKLKVSWENPSPEKPSAPESAQLSSSETPEATPRESKKPPAPPPKILSEKMKACMSGVDASGSSQSSEAPETTSPEPTQVSVNGMDDGPESALQAMGIPGPAPEDAAASPALPFSDLPSQFHPRSSSLGDLLRESPQHPRLPKEKLYRAQLEVKVASKQTEKLLNQVLGSEPPPVCAESLLSQAVEQLRQATQVLQEMRDLGELNQETPGLVQKRKELVTLYRRSAP.

The PH domain occupies 18–120 (TADKAGWIKK…WIKALNEGIN (103 aa)). Ser-165 and Ser-168 each carry phosphoserine. Residues 171 to 411 (LSRLDLDVPD…ESPQHPRLPK (241 aa)) are disordered. The segment covering 198 to 213 (QEPPRALMPPVKPSPG) has biased composition (pro residues). Residue Thr-233 is modified to Phosphothreonine. Residues 235-244 (DSASSGANPE) show a composition bias toward polar residues. Phosphoserine occurs at positions 236, 238, 239, 274, and 292. The residue at position 296 (Thr-296) is a Phosphothreonine. Over residues 324-335 (SGVDASGSSQSS) the composition is skewed to low complexity. Over residues 336–350 (EAPETTSPEPTQVSV) the composition is skewed to polar residues. Position 395 is a phosphoserine (Ser-395). A compositionally biased stretch (basic and acidic residues) spans 399–411 (LLRESPQHPRLPK). Residues 444 to 469 (CAESLLSQAVEQLRQATQVLQEMRDL) are a coiled coil.

The sequence is that of Pleckstrin homology domain-containing family O member 2 (Plekho2) from Mus musculus (Mouse).